The following is a 258-amino-acid chain: Snake venom serine proteinase 5 (258 aa).

A signal peptide spans 1 to 18 (MVLIRVLANLLILQLSYA). Residues 19 to 24 (QKSSEL) constitute a propeptide that is removed on maturation. The 225-residue stretch at 25 to 249 (VVGGDECNIN…YNDWIQSIIA (225 aa)) folds into the Peptidase S1 domain. 6 disulfides stabilise this stretch: Cys31-Cys163, Cys50-Cys66, Cys98-Cys256, Cys142-Cys210, Cys174-Cys189, and Cys200-Cys225. Residue Asn44 is glycosylated (N-linked (GlcNAc...) asparagine). Catalysis depends on charge relay system residues His65 and Asp110. Ser204 acts as the Charge relay system in catalysis.

The protein belongs to the peptidase S1 family. Snake venom subfamily. In terms of assembly, monomer. In terms of tissue distribution, expressed by the venom gland.

The protein localises to the secreted. Functionally, snake venom serine protease that may act in the hemostasis system of the prey. The chain is Snake venom serine proteinase 5 from Crotalus adamanteus (Eastern diamondback rattlesnake).